We begin with the raw amino-acid sequence, 329 residues long: DNA-directed RNA polymerase subunit alpha (329 aa).

An alpha N-terminal domain (alpha-NTD) region spans residues 1–235; it reads MQGSVTEFLK…EQLEAFVDLR (235 aa). The segment at 249-329 is alpha C-terminal domain (alpha-CTD); it reads FDPILLRPVD…NWPPASIADE (81 aa).

The protein belongs to the RNA polymerase alpha chain family. In terms of assembly, homodimer. The RNAP catalytic core consists of 2 alpha, 1 beta, 1 beta' and 1 omega subunit. When a sigma factor is associated with the core the holoenzyme is formed, which can initiate transcription.

The catalysed reaction is RNA(n) + a ribonucleoside 5'-triphosphate = RNA(n+1) + diphosphate. DNA-dependent RNA polymerase catalyzes the transcription of DNA into RNA using the four ribonucleoside triphosphates as substrates. The polypeptide is DNA-directed RNA polymerase subunit alpha (Shigella flexneri serotype 5b (strain 8401)).